The following is a 683-amino-acid chain: U4/U6 small nuclear ribonucleoprotein Prp3 (683 aa).

The 87-residue stretch at 1–87 (MALSKRELDE…HSKSSSDRSR (87 aa)) folds into the PWI domain. Positions 73 to 107 (GRSSRHSKSSSDRSRKRELKEVFGDDSEISKESSG) are enriched in basic and acidic residues. The tract at residues 73–135 (GRSSRHSKSS…IPGPPSESPG (63 aa)) is disordered. Lysine 139 is covalently cross-linked (Glycyl lysine isopeptide (Lys-Gly) (interchain with G-Cter in SUMO2)). A disordered region spans residues 153 to 183 (IEERKKQLSFISPPTPQPKTPSSSQPERLPI). Position 164 is a phosphoserine (serine 164). Threonine 167 carries the post-translational modification Phosphothreonine. Residues lysine 244 and lysine 252 each participate in a glycyl lysine isopeptide (Lys-Gly) (interchain with G-Cter in SUMO2) cross-link. Positions 416–550 (NLVEHPAQLN…VHISVYRVRN (135 aa)) are mediates interaction with SART3. At serine 619 the chain carries Phosphoserine.

Component of the precatalytic spliceosome (spliceosome B complex). Component of the U4/U6-U5 tri-snRNP complex, a building block of the precatalytic spliceosome (spliceosome B complex). The U4/U6-U5 tri-snRNP complex is composed of the U4, U6 and U5 snRNAs and at least PRPF3, PRPF4, PRPF6, PRPF8, PRPF31, SNRNP200, TXNL4A, SNRNP40, SNRPB, SNRPD1, SNRPD2, SNRPD3, SNRPE, SNRPF, SNRPG, DDX23, CD2BP2, PPIH, SNU13, EFTUD2, SART1 and USP39, plus LSM2, LSM3, LSM4, LSM5, LSM6, LSM7 and LSM8. Interacts directly with PRPF4. Part of a heteromeric complex containing PPIH, PRPF3 and PRPF4 that is stable in the absence of RNA. Interacts with SART3; the interaction is direct and recruits the deubiquitinase USP4 to PRPF3. Interacts with PRPF19. Interacts ('Lys-63'-linked polyubiquitinated) with PRPF8 (via the MPN (JAB/Mov34) domain); may stabilize the U4/U6-U5 tri-snRNP complex. Interacts with ERCC6. In terms of processing, ubiquitinated. Undergoes 'Lys-63'-linked polyubiquitination by PRPF19 and deubiquitination by USP4. 'Lys-63'-linked ubiquitination increases the affinity for PRPF8 and may regulate the assembly of the U4/U6-U5 tri-snRNP complex. Highly expressed in retina, liver, kidney and blood. Detected at lower levels in heart and brain.

The protein localises to the nucleus. It localises to the nucleus speckle. Its function is as follows. Plays a role in pre-mRNA splicing as component of the U4/U6-U5 tri-snRNP complex that is involved in spliceosome assembly, and as component of the precatalytic spliceosome (spliceosome B complex). The sequence is that of U4/U6 small nuclear ribonucleoprotein Prp3 (PRPF3) from Homo sapiens (Human).